Here is an 89-residue protein sequence, read N- to C-terminus: Small ribosomal subunit protein uS14A (89 aa).

This sequence belongs to the universal ribosomal protein uS14 family. As to quaternary structure, part of the 30S ribosomal subunit. Contacts proteins S3 and S10.

Binds 16S rRNA, required for the assembly of 30S particles and may also be responsible for determining the conformation of the 16S rRNA at the A site. In Oceanobacillus iheyensis (strain DSM 14371 / CIP 107618 / JCM 11309 / KCTC 3954 / HTE831), this protein is Small ribosomal subunit protein uS14A.